A 498-amino-acid polypeptide reads, in one-letter code: AP2-like ethylene-responsive transcription factor AIL7 (498 aa).

Positions 186-195 are enriched in polar residues; that stretch reads TSDQPLSCNN. Residues 186–220 form a disordered region; the sequence is TSDQPLSCNNGERGGNSNKKKTVSKKETSDDSKKK. The span at 209–220 shows a compositional bias: basic and acidic residues; the sequence is SKKETSDDSKKK. 2 DNA-binding regions (AP2/ERF) span residues 231–297 and 333–391; these read IYRG…TNFP and IYRG…TNFE. Residues 422-451 are compositionally biased toward low complexity; that stretch reads ESPSSSSSDHNLQQQQLLPSSSPSDQNPNS. Residues 422–452 are disordered; it reads ESPSSSSSDHNLQQQQLLPSSSPSDQNPNSI.

The protein belongs to the AP2/ERF transcription factor family. AP2 subfamily. Interacts with HDG2, and possibly with HDG3, HDG7, ANL2, ATML1 and PDF2. As to expression, expressed in roots, seedlings, inflorescence, and siliques. Also detected at low levels in leaves.

Its subcellular location is the nucleus. Functionally, probably acts as a transcriptional activator. Binds to the GCC-box pathogenesis-related promoter element. May be involved in the regulation of gene expression by stress factors and by components of stress signal transduction pathways. This chain is AP2-like ethylene-responsive transcription factor AIL7, found in Arabidopsis thaliana (Mouse-ear cress).